Here is a 462-residue protein sequence, read N- to C-terminus: tRNA-2-methylthio-N(6)-dimethylallyladenosine synthase (462 aa).

Positions 1-116 (MKLFIQTLGC…ITQVLERPKA (116 aa)) constitute an MTTase N-terminal domain. Cys10, Cys47, Cys79, Cys148, Cys152, and Cys155 together coordinate [4Fe-4S] cluster. In terms of domain architecture, Radical SAM core spans 134–370 (QGMGIKAHLN…NLHKEILSKK (237 aa)). A TRAM domain is found at 372–436 (QLEIGRIHNV…GGGLMGRFIN (65 aa)).

Belongs to the methylthiotransferase family. MiaB subfamily. As to quaternary structure, monomer. Requires [4Fe-4S] cluster as cofactor.

It localises to the cytoplasm. The catalysed reaction is N(6)-dimethylallyladenosine(37) in tRNA + (sulfur carrier)-SH + AH2 + 2 S-adenosyl-L-methionine = 2-methylsulfanyl-N(6)-dimethylallyladenosine(37) in tRNA + (sulfur carrier)-H + 5'-deoxyadenosine + L-methionine + A + S-adenosyl-L-homocysteine + 2 H(+). Its function is as follows. Catalyzes the methylthiolation of N6-(dimethylallyl)adenosine (i(6)A), leading to the formation of 2-methylthio-N6-(dimethylallyl)adenosine (ms(2)i(6)A) at position 37 in tRNAs that read codons beginning with uridine. The protein is tRNA-2-methylthio-N(6)-dimethylallyladenosine synthase of Helicobacter hepaticus (strain ATCC 51449 / 3B1).